A 292-amino-acid chain; its full sequence is NAD kinase (292 aa).

Asp-73 acts as the Proton acceptor in catalysis. NAD(+) is bound by residues 73 to 74 (DG), 147 to 148 (NE), His-158, Arg-175, Asp-177, 188 to 193 (TAYSLS), and Gln-247.

Belongs to the NAD kinase family. A divalent metal cation serves as cofactor.

The protein localises to the cytoplasm. It carries out the reaction NAD(+) + ATP = ADP + NADP(+) + H(+). Involved in the regulation of the intracellular balance of NAD and NADP, and is a key enzyme in the biosynthesis of NADP. Catalyzes specifically the phosphorylation on 2'-hydroxyl of the adenosine moiety of NAD to yield NADP. This chain is NAD kinase, found in Pectobacterium atrosepticum (strain SCRI 1043 / ATCC BAA-672) (Erwinia carotovora subsp. atroseptica).